Consider the following 594-residue polypeptide: Aspartate--tRNA(Asp/Asn) ligase (594 aa).

Residue Glu175 coordinates L-aspartate. The segment at 199-202 (QQLK) is aspartate. Arg221 lines the L-aspartate pocket. Residues 221–223 (RDE) and Gln230 contribute to the ATP site. Residue His450 coordinates L-aspartate. Residue Glu485 participates in ATP binding. Arg492 provides a ligand contact to L-aspartate. Residue 537–540 (GIDR) coordinates ATP.

This sequence belongs to the class-II aminoacyl-tRNA synthetase family. Type 1 subfamily. In terms of assembly, homodimer.

The protein localises to the cytoplasm. The enzyme catalyses tRNA(Asx) + L-aspartate + ATP = L-aspartyl-tRNA(Asx) + AMP + diphosphate. In terms of biological role, aspartyl-tRNA synthetase with relaxed tRNA specificity since it is able to aspartylate not only its cognate tRNA(Asp) but also tRNA(Asn). Reaction proceeds in two steps: L-aspartate is first activated by ATP to form Asp-AMP and then transferred to the acceptor end of tRNA(Asp/Asn). This chain is Aspartate--tRNA(Asp/Asn) ligase, found in Herpetosiphon aurantiacus (strain ATCC 23779 / DSM 785 / 114-95).